The chain runs to 256 residues: Hydroxyacylglutathione hydrolase (256 aa).

Residues His54, His56, Asp58, His59, His113, Asp136, and His174 each coordinate Zn(2+).

The protein belongs to the metallo-beta-lactamase superfamily. Glyoxalase II family. As to quaternary structure, monomer. Requires Zn(2+) as cofactor.

The catalysed reaction is an S-(2-hydroxyacyl)glutathione + H2O = a 2-hydroxy carboxylate + glutathione + H(+). It participates in secondary metabolite metabolism; methylglyoxal degradation; (R)-lactate from methylglyoxal: step 2/2. Its function is as follows. Thiolesterase that catalyzes the hydrolysis of S-D-lactoyl-glutathione to form glutathione and D-lactic acid. The sequence is that of Hydroxyacylglutathione hydrolase from Cyanothece sp. (strain PCC 7425 / ATCC 29141).